Reading from the N-terminus, the 241-residue chain is Sugar fermentation stimulation protein homolog (241 aa).

It belongs to the SfsA family.

The chain is Sugar fermentation stimulation protein homolog from Halorhodospira halophila (strain DSM 244 / SL1) (Ectothiorhodospira halophila (strain DSM 244 / SL1)).